We begin with the raw amino-acid sequence, 203 residues long: LexA repressor (203 aa).

Positions 28–48 (RAEIASQLGFRSPNAAEEHLK) form a DNA-binding region, H-T-H motif. Active-site for autocatalytic cleavage activity residues include Ser-120 and Lys-157.

It belongs to the peptidase S24 family. As to quaternary structure, homodimer.

It carries out the reaction Hydrolysis of Ala-|-Gly bond in repressor LexA.. Functionally, represses a number of genes involved in the response to DNA damage (SOS response), including recA and lexA. Binds to the 16 bp palindromic sequence 5'-CTGTATATATATACAG-3'. In the presence of single-stranded DNA, RecA interacts with LexA causing an autocatalytic cleavage which disrupts the DNA-binding part of LexA, leading to derepression of the SOS regulon and eventually DNA repair. The chain is LexA repressor from Proteus mirabilis (strain HI4320).